We begin with the raw amino-acid sequence, 593 residues long: Glyoxylate carboligase (593 aa).

It belongs to the TPP enzyme family. As to quaternary structure, homotetramer. Requires Mg(2+) as cofactor. It depends on thiamine diphosphate as a cofactor.

It catalyses the reaction 2 glyoxylate + H(+) = 2-hydroxy-3-oxopropanoate + CO2. Its pathway is organic acid metabolism; glycolate degradation; 3-phospho-D-glycerate from glycolate: step 2/4. Functionally, catalyzes the condensation of two molecules of glyoxylate to give 2-hydroxy-3-oxopropanoate (also termed tartronate semialdehyde). This Escherichia coli O157:H7 protein is Glyoxylate carboligase (gcl).